The following is an 88-amino-acid chain: Small ribosomal subunit protein bS16c (88 aa).

In terms of assembly, component of the chloroplast small ribosomal subunit (SSU). Mature 70S chloroplast ribosomes of higher plants consist of a small (30S) and a large (50S) subunit. The 30S small subunit contains 1 molecule of ribosomal RNA (16S rRNA) and 24 different proteins. The 50S large subunit contains 3 rRNA molecules (23S, 5S and 4.5S rRNA) and 33 different proteins.

Its subcellular location is the plastid. It is found in the chloroplast. Functionally, component of the chloroplast ribosome (chloro-ribosome), a dedicated translation machinery responsible for the synthesis of chloroplast genome-encoded proteins, including proteins of the transcription and translation machinery and components of the photosynthetic apparatus. The protein is Small ribosomal subunit protein bS16c of Spinacia oleracea (Spinach).